The sequence spans 293 residues: Carbapenem-hydrolyzing beta-lactamase KPC (293 aa).

A signal peptide spans 1 to 24 (MSLYRRLVLLSCLSWPLAGFSATA). S69 (acyl-ester intermediate) is an active-site residue. Residue E167 is the Proton acceptor of the active site. 233–235 (KTG) is a substrate binding site.

Belongs to the class-A beta-lactamase family.

It catalyses the reaction a beta-lactam + H2O = a substituted beta-amino acid. Its activity is regulated as follows. Not inhibited by EDTA, inhibited by clavulanic acid and tazobactam. In terms of biological role, hydrolyzes carbapenems, penicillins, cephalosporins and aztreonam with varying efficiency. The chain is Carbapenem-hydrolyzing beta-lactamase KPC (bla) from Klebsiella oxytoca.